The chain runs to 314 residues: DNA-directed RNA polymerase subunit alpha (314 aa).

The alpha N-terminal domain (alpha-NTD) stretch occupies residues 1–228 (MIEIEKPRIE…EHLNIFVDLT (228 aa)). Residues 245 to 314 (KEKVLEMSIE…DLGLGLRKED (70 aa)) are alpha C-terminal domain (alpha-CTD).

Belongs to the RNA polymerase alpha chain family. As to quaternary structure, homodimer. The RNAP catalytic core consists of 2 alpha, 1 beta, 1 beta' and 1 omega subunit. When a sigma factor is associated with the core the holoenzyme is formed, which can initiate transcription.

The catalysed reaction is RNA(n) + a ribonucleoside 5'-triphosphate = RNA(n+1) + diphosphate. Its function is as follows. DNA-dependent RNA polymerase catalyzes the transcription of DNA into RNA using the four ribonucleoside triphosphates as substrates. This is DNA-directed RNA polymerase subunit alpha from Macrococcus caseolyticus (strain JCSC5402) (Macrococcoides caseolyticum).